The following is a 560-amino-acid chain: MFS-type transporter pgmG (560 aa).

The segment at 1-32 (MSETVTQTETDQRPATARSLGAEEKEAKSDEQ) is disordered. Residues 21-31 (GAEEKEAKSDE) show a composition bias toward basic and acidic residues. 8 consecutive transmembrane segments (helical) span residues 45–65 (FIVI…NTIV), 84–104 (WLSV…SKIY), 111–131 (WLYL…GAAP), 141–161 (ALAG…LSVN), 174–194 (TGLT…GFAV), 201–221 (WSFY…LFML), 242–262 (LGTI…NFGG), and 275–295 (CFVV…YCIG). An N-linked (GlcNAc...) asparagine glycan is attached at Asn-300. The chain crosses the membrane as a helical span at residues 313–333 (FIILFVQTASVATVFFVPIYF). An N-linked (GlcNAc...) asparagine glycan is attached at Asn-343. Transmembrane regions (helical) follow at residues 346–366 (AIDA…AMIL), 378–398 (MPWY…MYTI), 409–429 (GYMI…FAVA), 440–460 (VATG…LAIA), and 515–535 (ISQV…LAIF).

Belongs to the major facilitator superfamily. TCR/Tet family.

It is found in the membrane. MFS-type transporter; part of the gene cluster that mediates the biosynthesis of pleosporalin A, ascomycone A, as well as a third cryptic naphthoquinone derived pigment, all responsible for the coloration of conidia. Seems not to be involved in pigment biosynthesis although its expression is regulated by the cluster-specific transcription factor pgmR. The sequence is that of MFS-type transporter pgmG from Aspergillus terreus.